Reading from the N-terminus, the 574-residue chain is Glutamate--tRNA ligase (574 aa).

Residues P109 to N119 carry the 'HIGH' region motif.

It belongs to the class-I aminoacyl-tRNA synthetase family. Glutamate--tRNA ligase type 2 subfamily.

It localises to the cytoplasm. It carries out the reaction tRNA(Glu) + L-glutamate + ATP = L-glutamyl-tRNA(Glu) + AMP + diphosphate. Functionally, catalyzes the attachment of glutamate to tRNA(Glu) in a two-step reaction: glutamate is first activated by ATP to form Glu-AMP and then transferred to the acceptor end of tRNA(Glu). This chain is Glutamate--tRNA ligase, found in Aeropyrum pernix (strain ATCC 700893 / DSM 11879 / JCM 9820 / NBRC 100138 / K1).